Reading from the N-terminus, the 200-residue chain is NAD(P)H dehydrogenase (quinone) (200 aa).

Residues 4-191 enclose the Flavodoxin-like domain; it reads VLVLYYSSYG…DIARYQGKHV (188 aa). FMN-binding positions include 10–15 and 79–81; these read SSYGHV and TRF. Residue Tyr12 coordinates NAD(+). Substrate is bound at residue Trp99. FMN contacts are provided by residues 114–120 and His135; that span reads STGTQHG.

This sequence belongs to the WrbA family. FMN is required as a cofactor.

It carries out the reaction a quinone + NADH + H(+) = a quinol + NAD(+). The catalysed reaction is a quinone + NADPH + H(+) = a quinol + NADP(+). This chain is NAD(P)H dehydrogenase (quinone), found in Burkholderia ambifaria (strain MC40-6).